The sequence spans 297 residues: Formylmethanofuran--tetrahydromethanopterin formyltransferase (297 aa).

Belongs to the FTR family. As to quaternary structure, homotetramer.

The protein localises to the cytoplasm. The enzyme catalyses N-formylmethanofuran + 5,6,7,8-tetrahydromethanopterin + H(+) = N(5)-formyl-5,6,7,8-tetrahydromethanopterin + methanofuran. It functions in the pathway metabolic intermediate metabolism; lactate oxidation. Catalyzes the transfer of a formyl group from 5-formyl tetrahydromethanopterin (5-formyl-H(4)MPT) to methanofuran (MFR) to produce formylmethanofuran (formyl-MFR) and tetrahydromethanopterin (H(4)MPT). The protein is Formylmethanofuran--tetrahydromethanopterin formyltransferase of Archaeoglobus fulgidus (strain ATCC 49558 / DSM 4304 / JCM 9628 / NBRC 100126 / VC-16).